The following is a 129-amino-acid chain: Transcription antitermination protein NusB (129 aa).

It belongs to the NusB family.

In terms of biological role, involved in transcription antitermination. Required for transcription of ribosomal RNA (rRNA) genes. Binds specifically to the boxA antiterminator sequence of the ribosomal RNA (rrn) operons. This is Transcription antitermination protein NusB from Staphylococcus epidermidis (strain ATCC 35984 / DSM 28319 / BCRC 17069 / CCUG 31568 / BM 3577 / RP62A).